A 289-amino-acid polypeptide reads, in one-letter code: Bifunctional protein FolD (289 aa).

NADP(+) is bound by residues 165–167 (GAS) and Ser-190.

It belongs to the tetrahydrofolate dehydrogenase/cyclohydrolase family. Homodimer.

The enzyme catalyses (6R)-5,10-methylene-5,6,7,8-tetrahydrofolate + NADP(+) = (6R)-5,10-methenyltetrahydrofolate + NADPH. It catalyses the reaction (6R)-5,10-methenyltetrahydrofolate + H2O = (6R)-10-formyltetrahydrofolate + H(+). It functions in the pathway one-carbon metabolism; tetrahydrofolate interconversion. In terms of biological role, catalyzes the oxidation of 5,10-methylenetetrahydrofolate to 5,10-methenyltetrahydrofolate and then the hydrolysis of 5,10-methenyltetrahydrofolate to 10-formyltetrahydrofolate. This is Bifunctional protein FolD from Ralstonia nicotianae (strain ATCC BAA-1114 / GMI1000) (Ralstonia solanacearum).